We begin with the raw amino-acid sequence, 266 residues long: Ribosomal RNA small subunit methyltransferase A (266 aa).

Positions 11, 13, 37, 57, 85, and 104 each coordinate S-adenosyl-L-methionine.

This sequence belongs to the class I-like SAM-binding methyltransferase superfamily. rRNA adenine N(6)-methyltransferase family. RsmA subfamily.

It localises to the cytoplasm. It catalyses the reaction adenosine(1518)/adenosine(1519) in 16S rRNA + 4 S-adenosyl-L-methionine = N(6)-dimethyladenosine(1518)/N(6)-dimethyladenosine(1519) in 16S rRNA + 4 S-adenosyl-L-homocysteine + 4 H(+). In terms of biological role, specifically dimethylates two adjacent adenosines (A1518 and A1519) in the loop of a conserved hairpin near the 3'-end of 16S rRNA in the 30S particle. May play a critical role in biogenesis of 30S subunits. The polypeptide is Ribosomal RNA small subunit methyltransferase A (Campylobacter jejuni (strain RM1221)).